Here is a 504-residue protein sequence, read N- to C-terminus: Maturase K (504 aa).

The protein belongs to the intron maturase 2 family. MatK subfamily.

The protein localises to the plastid. It is found in the chloroplast. Its function is as follows. Usually encoded in the trnK tRNA gene intron. Probably assists in splicing its own and other chloroplast group II introns. This Quercus robur (English oak) protein is Maturase K.